The chain runs to 354 residues: Guanine nucleotide-binding protein G(t) subunit alpha-2 (354 aa).

The disordered stretch occupies residues 1–28 (MGSGISAEDKELARRSKELEKKLQEDAD). Glycine 2 carries N-myristoyl glycine lipidation. The segment covering 7–28 (AEDKELARRSKELEKKLQEDAD) has biased composition (basic and acidic residues). In terms of domain architecture, G-alpha spans 32–354 (KTVKLLLLGA…KENLKDCGLF (323 aa)). The G1 motif stretch occupies residues 35–48 (KLLLLGAGESGKST). Residues 40–47 (GAGESGKS), 175–181 (LRSRVKT), 200–204 (DVGGQ), 269–272 (NKKD), and alanine 326 contribute to the GTP site. Positions 47 and 181 each coordinate Mg(2+). Residues 173–181 (DVLRSRVKT) are G2 motif. The interval 196-205 (FRMFDVGGQR) is G3 motif. The G4 motif stretch occupies residues 265 to 272 (VLFLNKKD). The G5 motif stretch occupies residues 324–329 (TCATDT).

It belongs to the G-alpha family. G(i/o/t/z) subfamily. As to quaternary structure, g proteins are composed of 3 units; alpha, beta and gamma. The alpha chain contains the guanine nucleotide binding site. In the retina, expressed in the rod photoreceptors.

Its subcellular location is the cell projection. The protein localises to the cilium. The protein resides in the photoreceptor outer segment. It localises to the photoreceptor inner segment. Functionally, guanine nucleotide-binding proteins (G proteins) are involved as modulators or transducers in various transmembrane signaling systems. Transducin is an amplifier and one of the transducers of a visual impulse that performs the coupling between rhodopsin and cGMP-phosphodiesterase. The chain is Guanine nucleotide-binding protein G(t) subunit alpha-2 (Gnat2) from Mus musculus (Mouse).